Consider the following 353-residue polypeptide: Uroporphyrinogen decarboxylase (353 aa).

Substrate contacts are provided by residues 30 to 34, Asp-79, Tyr-154, Ser-209, and His-332; that span reads RQAGR.

Belongs to the uroporphyrinogen decarboxylase family. In terms of assembly, homodimer.

The protein resides in the cytoplasm. The enzyme catalyses uroporphyrinogen III + 4 H(+) = coproporphyrinogen III + 4 CO2. Its pathway is porphyrin-containing compound metabolism; protoporphyrin-IX biosynthesis; coproporphyrinogen-III from 5-aminolevulinate: step 4/4. Catalyzes the decarboxylation of four acetate groups of uroporphyrinogen-III to yield coproporphyrinogen-III. The protein is Uroporphyrinogen decarboxylase of Mycobacterium ulcerans (strain Agy99).